The chain runs to 203 residues: Pyridoxine/pyridoxamine 5'-phosphate oxidase (203 aa).

FMN-binding positions include 50–55 (RMVLLK), 65–66 (YT), Lys71, Lys72, and Gln94. Lys55 contributes to the substrate binding site. The substrate site is built by Tyr112, Arg116, and Ser120. FMN contacts are provided by residues 129 to 130 (QS) and Trp174. 180–182 (RLH) lines the substrate pocket. Arg184 provides a ligand contact to FMN.

The protein belongs to the pyridoxamine 5'-phosphate oxidase family. As to quaternary structure, homodimer. It depends on FMN as a cofactor.

The catalysed reaction is pyridoxamine 5'-phosphate + O2 + H2O = pyridoxal 5'-phosphate + H2O2 + NH4(+). It carries out the reaction pyridoxine 5'-phosphate + O2 = pyridoxal 5'-phosphate + H2O2. The protein operates within cofactor metabolism; pyridoxal 5'-phosphate salvage; pyridoxal 5'-phosphate from pyridoxamine 5'-phosphate: step 1/1. Its pathway is cofactor metabolism; pyridoxal 5'-phosphate salvage; pyridoxal 5'-phosphate from pyridoxine 5'-phosphate: step 1/1. Its function is as follows. Catalyzes the oxidation of either pyridoxine 5'-phosphate (PNP) or pyridoxamine 5'-phosphate (PMP) into pyridoxal 5'-phosphate (PLP). This is Pyridoxine/pyridoxamine 5'-phosphate oxidase from Brucella canis (strain ATCC 23365 / NCTC 10854 / RM-666).